The primary structure comprises 325 residues: 2-dehydro-3-deoxygluconokinase (325 aa).

Substrate-binding positions include 49-53 (GSEAN), tyrosine 105, 121-123 (YYR), and arginine 181. Residues 179-181 (NIR), 240-245 (KLGAEG), and 269-272 (GAGD) each bind ATP. 2 residues coordinate substrate: aspartate 272 and aspartate 308. Aspartate 272 acts as the Proton acceptor in catalysis.

The protein belongs to the carbohydrate kinase PfkB family. Homohexamer; trimer of dimers.

The enzyme catalyses 2-dehydro-3-deoxy-D-gluconate + ATP = 2-dehydro-3-deoxy-6-phospho-D-gluconate + ADP + H(+). It participates in carbohydrate acid metabolism; 2-dehydro-3-deoxy-D-gluconate degradation; D-glyceraldehyde 3-phosphate and pyruvate from 2-dehydro-3-deoxy-D-gluconate: step 1/2. In terms of biological role, involved in the degradation of glucose via the semi-phosphorylative Entner-Doudoroff pathway. Catalyzes the phosphorylation of 2-keto-3-deoxygluconate (KDG) yielding 2-keto-3-deoxy-6-phosphogluconate (KDPG). This Thermoproteus tenax protein is 2-dehydro-3-deoxygluconokinase (kdgK).